The primary structure comprises 209 residues: Ribosomal RNA large subunit methyltransferase E (209 aa).

S-adenosyl-L-methionine is bound by residues Gly63, Trp65, Asp83, Asp99, and Asp124. Lys164 (proton acceptor) is an active-site residue.

The protein belongs to the class I-like SAM-binding methyltransferase superfamily. RNA methyltransferase RlmE family.

It is found in the cytoplasm. It carries out the reaction uridine(2552) in 23S rRNA + S-adenosyl-L-methionine = 2'-O-methyluridine(2552) in 23S rRNA + S-adenosyl-L-homocysteine + H(+). Its function is as follows. Specifically methylates the uridine in position 2552 of 23S rRNA at the 2'-O position of the ribose in the fully assembled 50S ribosomal subunit. This chain is Ribosomal RNA large subunit methyltransferase E, found in Shewanella pealeana (strain ATCC 700345 / ANG-SQ1).